The sequence spans 668 residues: Ubiquitin ligase complex F-box protein UFO1 (668 aa).

Positions 5 to 51 constitute an F-box domain; that stretch reads GLVLQDLPPEILINIFSHLDEKDLFTLQELSTHFRNLIHDEELWKNL. Phosphoserine is present on serine 511. The residue at position 514 (threonine 514) is a Phosphothreonine. 3 consecutive UIM domains span residues 547-566, 583-602, and 651-668; these read DEDE…YETQ, EDDE…DERR, and NVDE…SEIN. Over residues 564-578 the composition is skewed to polar residues; that stretch reads ETQTNSSANHGNNTN. Disordered stretches follow at residues 564 to 585 and 599 to 639; these read ETQT…DEDD and DERR…TENT.

In terms of assembly, interacts with SKP1. Component of the probable SCF(UFO1) complex containing CDC53, SKP1, RBX1 and UFO1.

It functions in the pathway protein modification; protein ubiquitination. In terms of biological role, substrate recognition component of a SCF (SKP1-CUL1-F-box protein) E3 ubiquitin-protein ligase complex which mediates the ubiquitination and subsequent proteasomal degradation of target proteins. Probably recognizes and binds to phosphorylated target proteins. The protein is Ubiquitin ligase complex F-box protein UFO1 (UFO1) of Saccharomyces cerevisiae (strain ATCC 204508 / S288c) (Baker's yeast).